We begin with the raw amino-acid sequence, 412 residues long: Putative F-box protein At3g22940 (412 aa).

Positions 1–38 (MPLEEILSRLPLKSTRAVRSTCKKWDSLFKNRSFISKA) constitute an F-box domain.

This Arabidopsis thaliana (Mouse-ear cress) protein is Putative F-box protein At3g22940.